The primary structure comprises 83 residues: Small ribosomal subunit protein bS16 (83 aa).

This sequence belongs to the bacterial ribosomal protein bS16 family.

In Polaromonas sp. (strain JS666 / ATCC BAA-500), this protein is Small ribosomal subunit protein bS16.